A 470-amino-acid chain; its full sequence is Glutamate--tRNA ligase 2 (470 aa).

A 'HIGH' region motif is present at residues 10-20; sequence PSPTGFLHIGS. The 'KMSKS' region signature appears at 239-243; the sequence is KLSKR. K242 is a binding site for ATP.

The protein belongs to the class-I aminoacyl-tRNA synthetase family. Glutamate--tRNA ligase type 1 subfamily. As to quaternary structure, monomer.

It localises to the cytoplasm. The catalysed reaction is tRNA(Glu) + L-glutamate + ATP = L-glutamyl-tRNA(Glu) + AMP + diphosphate. Catalyzes the attachment of glutamate to tRNA(Glu) in a two-step reaction: glutamate is first activated by ATP to form Glu-AMP and then transferred to the acceptor end of tRNA(Glu). The protein is Glutamate--tRNA ligase 2 of Rickettsia prowazekii (strain Madrid E).